A 67-amino-acid polypeptide reads, in one-letter code: Large ribosomal subunit protein uL29 (67 aa).

The protein belongs to the universal ribosomal protein uL29 family.

In Halorhodospira halophila (strain DSM 244 / SL1) (Ectothiorhodospira halophila (strain DSM 244 / SL1)), this protein is Large ribosomal subunit protein uL29.